A 72-amino-acid polypeptide reads, in one-letter code: Translation initiation factor IF-1 (72 aa).

Positions 1–72 constitute an S1-like domain; sequence MSKEEVLEFS…TKGRITYRYK (72 aa).

This sequence belongs to the IF-1 family. In terms of assembly, component of the 30S ribosomal translation pre-initiation complex which assembles on the 30S ribosome in the order IF-2 and IF-3, IF-1 and N-formylmethionyl-tRNA(fMet); mRNA recruitment can occur at any time during PIC assembly.

It localises to the cytoplasm. Its function is as follows. One of the essential components for the initiation of protein synthesis. Stabilizes the binding of IF-2 and IF-3 on the 30S subunit to which N-formylmethionyl-tRNA(fMet) subsequently binds. Helps modulate mRNA selection, yielding the 30S pre-initiation complex (PIC). Upon addition of the 50S ribosomal subunit IF-1, IF-2 and IF-3 are released leaving the mature 70S translation initiation complex. The polypeptide is Translation initiation factor IF-1 (Bartonella tribocorum (strain CIP 105476 / IBS 506)).